The chain runs to 349 residues: MEFTAQQIADYLHGSVEGNPKVRLHDFAKIEEGRSGCLSFLANAKYEHYLYQTQSDAVLVNQDFEPRESVKTTLIRVPNAYTALAQLMQLVDSMKPQRKGVDSTAFVHPSVILPDDCYVGAFAYVSEGASLGTGCSLYPHVYVGSGVSVGEGTILYPHVTVYDGCSIGSRCVIHSGAVIGADGFGFAPNAEGYSKIPQLGNVIIEDDVEIGANTCIDRAVMDSTIIHRGVKLDNLVQIAHNCSVGSHTVFAAQVGMAGSSHVGEWCQFGGQVGLSGHIKVGDRVSLGGQTGLLSNVKSGSTLLGSPGMPLRDMLRASVIFPKLPDMSLRIEQLEKEISELKEICKNNKH.

Histidine 240 serves as the catalytic Proton acceptor.

Belongs to the transferase hexapeptide repeat family. LpxD subfamily. Homotrimer.

The catalysed reaction is a UDP-3-O-[(3R)-3-hydroxyacyl]-alpha-D-glucosamine + a (3R)-hydroxyacyl-[ACP] = a UDP-2-N,3-O-bis[(3R)-3-hydroxyacyl]-alpha-D-glucosamine + holo-[ACP] + H(+). It participates in bacterial outer membrane biogenesis; LPS lipid A biosynthesis. In terms of biological role, catalyzes the N-acylation of UDP-3-O-acylglucosamine using 3-hydroxyacyl-ACP as the acyl donor. Is involved in the biosynthesis of lipid A, a phosphorylated glycolipid that anchors the lipopolysaccharide to the outer membrane of the cell. The sequence is that of UDP-3-O-acylglucosamine N-acyltransferase from Porphyromonas gingivalis (strain ATCC BAA-308 / W83).